The following is a 120-amino-acid chain: ATP-dependent Clp protease adapter protein ClpS (120 aa).

The interval 1–25 (MHARSEIRLTFNQDRPQSNEDDGSG) is disordered.

Belongs to the ClpS family. Binds to the N-terminal domain of the chaperone ClpA.

Involved in the modulation of the specificity of the ClpAP-mediated ATP-dependent protein degradation. The polypeptide is ATP-dependent Clp protease adapter protein ClpS (Pseudomonas putida (strain W619)).